The chain runs to 277 residues: MAPNSSVTVGNVVFDNNAALALIAGPCQFESRQHAFDMAGALKELTARLGIGLVYKTSYDKANRTSLSATRGAGMDAALPVFDELRKEFSLPVLTDVHTEEQCAIVAPHVDVLQIPAFLSRQTDMLVAAAKTGKVINVKKGQFLAPWDMKNVVAKITGSGNPNVLTTERGASFGYNTLVSDMRALPVMAEIGAPVIFDATHSVQQPGGQGGSSGGERRFVETLARAAVAVGVAGVFIETHQDPDNSTSSDGPNMLPLKDMPALLERLMAFDRIAKGR.

The protein belongs to the KdsA family.

The protein localises to the cytoplasm. It catalyses the reaction D-arabinose 5-phosphate + phosphoenolpyruvate + H2O = 3-deoxy-alpha-D-manno-2-octulosonate-8-phosphate + phosphate. It participates in carbohydrate biosynthesis; 3-deoxy-D-manno-octulosonate biosynthesis; 3-deoxy-D-manno-octulosonate from D-ribulose 5-phosphate: step 2/3. It functions in the pathway bacterial outer membrane biogenesis; lipopolysaccharide biosynthesis. The chain is 2-dehydro-3-deoxyphosphooctonate aldolase (kdsA) from Mesorhizobium japonicum (strain LMG 29417 / CECT 9101 / MAFF 303099) (Mesorhizobium loti (strain MAFF 303099)).